The following is a 779-amino-acid chain: Phosphoribosylformylglycinamidine synthase subunit PurL (779 aa).

Histidine 52 is an active-site residue. ATP is bound by residues tyrosine 55 and lysine 94. Glutamate 96 is a Mg(2+) binding site. Substrate is bound by residues serine 97–histidine 100 and arginine 119. The active-site Proton acceptor is histidine 98. Aspartate 120 serves as a coordination point for Mg(2+). Residue glutamine 243 coordinates substrate. Aspartate 271 contacts Mg(2+). Glutamate 315–glutamine 317 is a binding site for substrate. ATP is bound by residues asparagine 523 and glycine 560. Asparagine 561 lines the Mg(2+) pocket. Serine 563 is a binding site for substrate.

The protein belongs to the FGAMS family. Monomer. Part of the FGAM synthase complex composed of 1 PurL, 1 PurQ and 2 PurS subunits.

It is found in the cytoplasm. It catalyses the reaction N(2)-formyl-N(1)-(5-phospho-beta-D-ribosyl)glycinamide + L-glutamine + ATP + H2O = 2-formamido-N(1)-(5-O-phospho-beta-D-ribosyl)acetamidine + L-glutamate + ADP + phosphate + H(+). It participates in purine metabolism; IMP biosynthesis via de novo pathway; 5-amino-1-(5-phospho-D-ribosyl)imidazole from N(2)-formyl-N(1)-(5-phospho-D-ribosyl)glycinamide: step 1/2. Functionally, part of the phosphoribosylformylglycinamidine synthase complex involved in the purines biosynthetic pathway. Catalyzes the ATP-dependent conversion of formylglycinamide ribonucleotide (FGAR) and glutamine to yield formylglycinamidine ribonucleotide (FGAM) and glutamate. The FGAM synthase complex is composed of three subunits. PurQ produces an ammonia molecule by converting glutamine to glutamate. PurL transfers the ammonia molecule to FGAR to form FGAM in an ATP-dependent manner. PurS interacts with PurQ and PurL and is thought to assist in the transfer of the ammonia molecule from PurQ to PurL. The protein is Phosphoribosylformylglycinamidine synthase subunit PurL of Prochlorococcus marinus subsp. pastoris (strain CCMP1986 / NIES-2087 / MED4).